The chain runs to 383 residues: Queuine tRNA-ribosyltransferase (383 aa).

Catalysis depends on Asp-92, which acts as the Proton acceptor. Residues 92-96 (DSGGF), Asp-146, Gln-190, and Gly-217 each bind substrate. The segment at 248–254 (GVGKPED) is RNA binding. Asp-267 (nucleophile) is an active-site residue. The RNA binding; important for wobble base 34 recognition stretch occupies residues 272–276 (TRNAR). Residues Cys-310, Cys-312, Cys-315, and His-341 each coordinate Zn(2+).

Belongs to the queuine tRNA-ribosyltransferase family. As to quaternary structure, homodimer. Within each dimer, one monomer is responsible for RNA recognition and catalysis, while the other monomer binds to the replacement base PreQ1. Zn(2+) is required as a cofactor.

The catalysed reaction is 7-aminomethyl-7-carbaguanine + guanosine(34) in tRNA = 7-aminomethyl-7-carbaguanosine(34) in tRNA + guanine. It functions in the pathway tRNA modification; tRNA-queuosine biosynthesis. Functionally, catalyzes the base-exchange of a guanine (G) residue with the queuine precursor 7-aminomethyl-7-deazaguanine (PreQ1) at position 34 (anticodon wobble position) in tRNAs with GU(N) anticodons (tRNA-Asp, -Asn, -His and -Tyr). Catalysis occurs through a double-displacement mechanism. The nucleophile active site attacks the C1' of nucleotide 34 to detach the guanine base from the RNA, forming a covalent enzyme-RNA intermediate. The proton acceptor active site deprotonates the incoming PreQ1, allowing a nucleophilic attack on the C1' of the ribose to form the product. After dissociation, two additional enzymatic reactions on the tRNA convert PreQ1 to queuine (Q), resulting in the hypermodified nucleoside queuosine (7-(((4,5-cis-dihydroxy-2-cyclopenten-1-yl)amino)methyl)-7-deazaguanosine). The chain is Queuine tRNA-ribosyltransferase from Psychrobacter sp. (strain PRwf-1).